The chain runs to 155 residues: Reticulon-like protein B23 (155 aa).

Residues 1 to 155 (MGEMGKAIGL…LNRRNGEILD (155 aa)) enclose the Reticulon domain. Helical transmembrane passes span 30 to 50 (SLIS…GLLF) and 117 to 137 (IISG…SMLF).

The protein localises to the endoplasmic reticulum membrane. This chain is Reticulon-like protein B23 (RTNLB23), found in Arabidopsis thaliana (Mouse-ear cress).